Consider the following 217-residue polypeptide: L-lactate dehydrogenase B chain (217 aa).

Residue asparagine 22 participates in NAD(+) binding. Substrate is bound by residues asparagine 22 and arginine 53. Histidine 77 serves as the catalytic Proton acceptor. Tyrosine 123 is modified (phosphotyrosine). Residue threonine 132 coordinates substrate. An N6-acetyllysine modification is found at lysine 212.

Belongs to the LDH/MDH superfamily. LDH family. As to quaternary structure, homotetramer. Interacts with PTEN upstream reading frame protein MP31; the interaction leads to inhibition of mitochondrial lactate dehydrogenase activity, preventing conversion of lactate to pyruvate in mitochondria.

The protein resides in the cytoplasm. The protein localises to the mitochondrion inner membrane. It carries out the reaction (S)-lactate + NAD(+) = pyruvate + NADH + H(+). It participates in fermentation; pyruvate fermentation to lactate; (S)-lactate from pyruvate: step 1/1. In terms of biological role, interconverts simultaneously and stereospecifically pyruvate and lactate with concomitant interconversion of NADH and NAD(+). The chain is L-lactate dehydrogenase B chain (LDHB) from Oryctolagus cuniculus (Rabbit).